The primary structure comprises 147 residues: Small ribosomal subunit protein uS5 (147 aa).

The region spanning 9–72 (FEEVIVDIGR…DDAFKNIVEV (64 aa)) is the S5 DRBM domain.

This sequence belongs to the universal ribosomal protein uS5 family. As to quaternary structure, part of the 30S ribosomal subunit. Contacts proteins S4 and S8.

With S4 and S12 plays an important role in translational accuracy. Its function is as follows. Located at the back of the 30S subunit body where it stabilizes the conformation of the head with respect to the body. The chain is Small ribosomal subunit protein uS5 from Campylobacter fetus subsp. fetus (strain 82-40).